A 59-amino-acid chain; its full sequence is uncharacterized protein (59 aa).

Residues 7–27 (LLLLVAIALISAFALTVTGVV) traverse the membrane as a helical segment.

Its subcellular location is the membrane. This is an uncharacterized protein from Pyrobaculum aerophilum (strain ATCC 51768 / DSM 7523 / JCM 9630 / CIP 104966 / NBRC 100827 / IM2).